The sequence spans 308 residues: HTH-type transcriptional activator AllS (308 aa).

The region spanning 2-59 (FDPETLRTFISVAETGSFSKAAERLCKTTATTSYRIKLLEENTGVGLFFRTTRSVSLT) is the HTH lysR-type domain. A DNA-binding region (H-T-H motif) is located at residues 19–38 (FSKAAERLCKTTATTSYRIK).

It belongs to the LysR transcriptional regulatory family.

Functionally, positive regulator essential for the expression of allD operon. Binds to the allD promoter. This is HTH-type transcriptional activator AllS (allS) from Salmonella typhi.